The sequence spans 441 residues: Enolase (441 aa).

Gln164 lines the (2R)-2-phosphoglycerate pocket. The active-site Proton donor is Glu206. Positions 243, 289, and 316 each coordinate Mg(2+). (2R)-2-phosphoglycerate contacts are provided by Lys341, Arg370, Ser371, and Lys392. Lys341 serves as the catalytic Proton acceptor.

It belongs to the enolase family. The cofactor is Mg(2+).

It is found in the cytoplasm. The protein localises to the secreted. It localises to the cell surface. It carries out the reaction (2R)-2-phosphoglycerate = phosphoenolpyruvate + H2O. Its pathway is carbohydrate degradation; glycolysis; pyruvate from D-glyceraldehyde 3-phosphate: step 4/5. Its function is as follows. Catalyzes the reversible conversion of 2-phosphoglycerate (2-PG) into phosphoenolpyruvate (PEP). It is essential for the degradation of carbohydrates via glycolysis. This is Enolase from Leuconostoc citreum (strain KM20).